The following is a 194-amino-acid chain: MSFAEKITGLLARPNQQDPIGPEQPWYLKYGSRLLGIVAAFFAILFGLWNVFSIITLSVSCLVAGIIQMVAGFVVMLLEAPCCFVCFEQVNVIADKVDSKPLYFRAGLYITMAIPPIILCFGLASLFGSGLIFGTGVVYGMMALGKKASAEDMRAAAQQTFGGNTPAQTNDRAGIVNNAQPFSFTGAVGTDSNV.

Helical transmembrane passes span 35 to 55 (LGIV…FSII), 66 to 88 (IIQM…VCFE), and 113 to 133 (AIPP…GLIF).

Belongs to the calcium channel flower family. As to quaternary structure, homomultimer. Associates with the dally/ magu complex.

Its subcellular location is the cytoplasmic vesicle. It localises to the secretory vesicle. The protein localises to the synaptic vesicle membrane. It is found in the presynaptic cell membrane. The protein resides in the endosome. Its activity is regulated as follows. Channel activity is inhibited by La(3+), which reduces Ca(2+) influx and thus inhibits it's function in promoting activity-dependent bulk endocytosis (ADBE) in response to high stimuli. Its function is as follows. Transmembrane protein which mediates synaptic endocytosis, fitness-based cell culling, neuronal culling, morphogen gradient scaling, and calcium transport. Regulates synaptic endocytosis and hence couples exo- with endocytosis. Controls two major modes of synaptic vesicle (SV) endocytosis in the synaptic boutons of neuromuscular junctions (NMJs); Ca(2+) channel-independent Clathrin-mediated endocytosis (CME) in response to mild stimulation, and Ca(2+) channel-dependent activity-dependent bulk endocytosis (ADBE) in response to strong stimulation. Functions in ADBE and subsequent SV reformation from bulk endosomes by initiating Ca(2+) channel-dependent phosphatidylinositol 4,5-bisphosphate (PtdIns(4,5)P2) compartmentalization in synaptic boutons. There it acts at the periactive zone to provide the low Ca(2+) levels required to initiate Calcineurin activation and upregulate PtdIns(4,5)P2. Conversely PtdIns(4,5)P2 enhances fwe Ca(2+) channel-activity, establishing a positive feedback loop that induces PtdIns(4,5)P2 microdomain at the periactive zone. These microdomains trigger bulk membrane invagination (i.e. ADBE) by triggering actin polymerization while also promoting localization of fwe to bulk endosomes, thereby removing the ADBE trigger to reduce endocytosis and prevent excess membrane uptake. PtdIns(4,5)P2 then promotes SV reformation from the bulk endosomes, to coordinate ADBE and subsequent SV reformation. Different combinations of the flower isoforms at the cell membrane are also required for the identification and elimination of suboptimal or supernumerary cells during development, regeneration, and adulthood. Required for the recognition and elimination of unfit cells in the developing wing during cell competition. In the developing pupal retina, mediates the elimination of unwanted postmitotic neurons, including supernumerary photoreceptor neurons that form at the periphery of the retina and are contained within incomplete ommatidia units. Also required for efficient elimination and replacement of old neurons by newly generated neurons during regeneration in the adult brain following mechanical injury. Downstream of the flower fitness fingerprints, cells identified as unwanted or unfit are eliminated via apoptosis through the expression of ahuizotl (azot). However, the cells marked for elimination by the flower isoforms only undergo apoptosis if additional thresholds are met; (1) their neighboring fit/healthy cells express different levels of the fwe isoforms, and (2) the levels of the protective signal SPARC expressed by the loser or unwanted cells are unable to inhibit caspase activation. These additional thresholds for flower-mediated apoptosis, allows useful cells to recover from transient and limited stress before they are unnecessarily eliminated. Functions with dally and magu in a mechanism of scaling, which utilises apoptosis to ensure that the dpp morphogen gradient, which mediates organ growth, remains proportional to the size of the growing wing. In this mechanism, fwe represses dally- and Magu-dependent activity in expanding the gradient, and dally/Magu inhibits fwe-dependent apoptosis to keep cell death rate low. When the levels of these different proteins are optimally regulated the gradient correctly scales with organ growth but when this fails, fwe-mediated apoptosis is activated to trim the developing tissue to match the correct size of the gradient. The sequence is that of Calcium channel flower from Drosophila yakuba (Fruit fly).